A 1009-amino-acid polypeptide reads, in one-letter code: Probable beta-galactosidase B (1009 aa).

An N-terminal signal peptide occupies residues 1 to 21; it reads MAQLFTKIIVYFLLFASPLLA. N28 is a glycosylation site (N-linked (GlcNAc...) asparagine). Y85 provides a ligand contact to substrate. N-linked (GlcNAc...) asparagine glycosylation is present at N95. Positions 130, 131, 132, and 190 each coordinate substrate. Catalysis depends on E191, which acts as the Proton donor. An N-linked (GlcNAc...) asparagine glycan is attached at N247. Position 260 (Y260) interacts with substrate. The cysteines at positions 266 and 319 are disulfide-linked. E303 serves as the catalytic Nucleophile. Y368 is a substrate binding site. Residues N375, N406, N427, N451, N682, N740, N771, N784, N826, and N883 are each glycosylated (N-linked (GlcNAc...) asparagine).

The protein belongs to the glycosyl hydrolase 35 family.

The protein resides in the secreted. The catalysed reaction is Hydrolysis of terminal non-reducing beta-D-galactose residues in beta-D-galactosides.. Its function is as follows. Cleaves beta-linked terminal galactosyl residues from gangliosides, glycoproteins, and glycosaminoglycans. In Talaromyces marneffei (strain ATCC 18224 / CBS 334.59 / QM 7333) (Penicillium marneffei), this protein is Probable beta-galactosidase B (lacB).